Consider the following 87-residue polypeptide: Large ribosomal subunit protein bL31B (87 aa).

This sequence belongs to the bacterial ribosomal protein bL31 family. Type B subfamily. In terms of assembly, part of the 50S ribosomal subunit.

The chain is Large ribosomal subunit protein bL31B from Corynebacterium kroppenstedtii (strain DSM 44385 / JCM 11950 / CIP 105744 / CCUG 35717).